The primary structure comprises 172 residues: uncharacterized protein (172 aa).

The next 4 membrane-spanning stretches (helical) occupy residues 46-66 (MFSI…FLYP), 76-96 (LLSL…VGLF), 104-124 (WKFL…LGWS), and 129-149 (FFYA…FTEI).

The protein resides in the endoplasmic reticulum membrane. This is an uncharacterized protein from Schizosaccharomyces pombe (strain 972 / ATCC 24843) (Fission yeast).